Reading from the N-terminus, the 277-residue chain is Caspase-3 (277 aa).

Position 1 is an N-acetylmethionine (M1). 2 propeptides span residues 1-9 and 10-28; these read MENSENSVD and AKSI…KSMD. K11 carries the post-translational modification N6-acetyllysine. S26 bears the Phosphoserine mark. Residues H121 and C163 contribute to the active site. C163 carries the S-nitrosocysteine; in inhibited form modification.

Belongs to the peptidase C14A family. As to quaternary structure, heterotetramer that consists of two anti-parallel arranged heterodimers, each one formed by a 17 kDa (p17) and a 12 kDa (p12) subunit. Interacts with BIRC6/bruce. Post-translationally, cleavage by granzyme B, caspase-6, caspase-8 and caspase-10 generates the two active subunits. Additional processing of the propeptides is likely due to the autocatalytic activity of the activated protease. Active heterodimers between the small subunit of caspase-7 protease and the large subunit of caspase-3 also occur and vice versa. In terms of processing, S-nitrosylated on its catalytic site cysteine in unstimulated cell lines and denitrosylated upon activation of the Fas apoptotic pathway, associated with an increase in intracellular caspase activity. Fas therefore activates caspase-3 not only by inducing the cleavage of the caspase zymogen to its active subunits, but also by stimulating the denitrosylation of its active site thiol. Ubiquitinated by BIRC6; this activity is inhibited by DIABLO/SMAC.

It localises to the cytoplasm. It catalyses the reaction Strict requirement for an Asp residue at positions P1 and P4. It has a preferred cleavage sequence of Asp-Xaa-Xaa-Asp-|- with a hydrophobic amino-acid residue at P2 and a hydrophilic amino-acid residue at P3, although Val or Ala are also accepted at this position.. Inhibited by BIRC6; following inhibition of BIRC6-caspase binding by DIABLO/SMAC, BIRC6 is subjected to caspase cleavage, leading to an increase in active caspases. In terms of biological role, involved in the activation cascade of caspases responsible for apoptosis execution. At the onset of apoptosis, it proteolytically cleaves poly(ADP-ribose) polymerase PARP1 at a '216-Asp-|-Gly-217' bond. Cleaves and activates sterol regulatory element binding proteins (SREBPs) between the basic helix-loop-helix leucine zipper domain and the membrane attachment domain. Cleaves and activates caspase-6, -7 and -9 (CASP6, CASP7 and CASP9, respectively). Cleaves and inactivates interleukin-18 (IL18). Triggers cell adhesion in sympathetic neurons through RET cleavage. Cleaves IL-1 beta between an Asp and an Ala, releasing the mature cytokine which is involved in a variety of inflammatory processes. Cleaves and inhibits serine/threonine-protein kinase AKT1 in response to oxidative stress. Acts as an inhibitor of type I interferon production during virus-induced apoptosis by mediating cleavage of antiviral proteins CGAS, IRF3 and MAVS, thereby preventing cytokine overproduction. Also involved in pyroptosis by mediating cleavage and activation of gasdermin-E (GSDME). Cleaves XRCC4 and phospholipid scramblase proteins XKR4, XKR8 and XKR9, leading to promote phosphatidylserine exposure on apoptotic cell surface. Cleaves BIRC6 following inhibition of BIRC6-caspase binding by DIABLO/SMAC. The sequence is that of Caspase-3 (CASP3) from Felis catus (Cat).